The primary structure comprises 119 residues: Large ribosomal subunit protein bL20 (119 aa).

It belongs to the bacterial ribosomal protein bL20 family.

In terms of biological role, binds directly to 23S ribosomal RNA and is necessary for the in vitro assembly process of the 50S ribosomal subunit. It is not involved in the protein synthesizing functions of that subunit. This Streptococcus mutans serotype c (strain ATCC 700610 / UA159) protein is Large ribosomal subunit protein bL20.